A 172-amino-acid chain; its full sequence is Ribosome maturation factor RimM (172 aa).

The PRC barrel domain occupies 96–170 (EENEFYFHEI…KITIEVMEGL (75 aa)).

The protein belongs to the RimM family. In terms of assembly, binds ribosomal protein uS19.

The protein resides in the cytoplasm. In terms of biological role, an accessory protein needed during the final step in the assembly of 30S ribosomal subunit, possibly for assembly of the head region. Essential for efficient processing of 16S rRNA. May be needed both before and after RbfA during the maturation of 16S rRNA. It has affinity for free ribosomal 30S subunits but not for 70S ribosomes. The protein is Ribosome maturation factor RimM of Listeria monocytogenes serotype 4b (strain CLIP80459).